We begin with the raw amino-acid sequence, 595 residues long: MKTILLFALSLLLSLSVSDVCAQERVYDISQFGLKANSKKNASPVVRKAIAKIKAECRDGEKVILRFPAGRYNFHEAGSTVREYYISNHDQDNPKKVGIALEDMKNLTIDGQGSEFVFYGRMIPVSLLRSENCVLKNFSIDFEQPHIAQVQVVENDPEKGITFEPAPWVDYRISKDSVFEGLGEGWVMRYSWGIAFDGKTKHVVYNTSDIGCPTKGAFEVAPRRICSPKWKDARLVPGTVVAMRGWGRPTPGIFMSHDVNTSLLDVKVHYAEGMGLLAQLCEDITLDGFGVCLKGDNDPRYFTTQADATHFSGCKGKIVSKNGLYEGMMDDAINVHGTYLKVIKRVDDHTLIGRYMHDQSWGFEWGRPGDDVQFVRSETMELIGKQNQITAIRPYDKGEIRGAREFSITFKEAIDPAINEKSGFGIENLTWTPEVLFAGNTIRNNRARGTLFSTPKKTVVEDNLFDHTSGTAILLCGDCNGWFETGACRDVTIRRNRFINALTNMFQFTNAVISIYPEIPNLKDQQKYFHGGKDGGIVIEDNEFDTFDAPILYAKSVDGLIFRNNVIKTNTEFKPFHWNKDRFLLERVTNVKISE.

The N-terminal stretch at 1 to 22 (MKTILLFALSLLLSLSVSDVCA) is a signal peptide. 3 PbH1 repeats span residues 432-454 (TPEV…LFST), 455-477 (PKKT…LLCG), and 488-541 (CRDV…VIED).

Belongs to the glycosyl hydrolase 110 family. B subfamily.

The enzyme catalyses Hydrolysis of terminal, non-reducing branched (1-&gt;3)-alpha-D-galactosidic residues, producing free D-galactose.. It catalyses the reaction Hydrolysis of terminal, non-reducing linear (1-&gt;3)-alpha-D-galactosidic residues, producing free D-galactose.. The catalysed reaction is Hydrolysis of terminal, non-reducing alpha-D-galactose residues in alpha-D-galactosides, including galactose oligosaccharides, galactomannans and galactolipids.. Its function is as follows. Alpha-galactosidase. Removes both branched alpha-1,3-linked galactose residues of blood group B antigens and linear alpha-1,3-linked galactose structures. This chain is Alpha-1,3-galactosidase B (glaB), found in Bacteroides fragilis (strain ATCC 25285 / DSM 2151 / CCUG 4856 / JCM 11019 / LMG 10263 / NCTC 9343 / Onslow / VPI 2553 / EN-2).